A 526-amino-acid polypeptide reads, in one-letter code: Keratin, type I cytoskeletal 10 (526 aa).

Low complexity predominate over residues 1 to 16 (MSVRFSSNSRQYSSAR). Residues 1–40 (MSVRFSSNSRQYSSARSGGGGGGGGGGSSIRVSSTKSSLG) are disordered. Residues 1–144 (MSVRFSSNSR…GDGGGLLSGN (144 aa)) are head. Phosphoserine occurs at positions 17, 38, 49, 52, and 169. A compositionally biased stretch (gly residues) spans 17 to 28 (SGGGGGGGGGGS). The coil 1A stretch occupies residues 145–180 (EKVTMQNLNDRLASYMNKVRDLEESNYELEGKIKEW). Residues 145 to 459 (EKVTMQNLND…SLLEGEGGYV (315 aa)) form the IF rod domain. Positions 181-201 (YEKHGNSSQREPRDYSKYYKT) are linker 1. The coil 1B stretch occupies residues 202 to 293 (IEDLKGQIVN…KNHEEEMKDL (92 aa)). The segment at 294–316 (QNVSTGDVNVEMNAAPGVDLTQL) is linker 12. The coil 2 stretch occupies residues 317–455 (LNNMRNQYEQ…QTYRSLLEGE (139 aa)). Residues 456–526 (GGYVGNLQIT…IESETKKHFY (71 aa)) are tail.

It belongs to the intermediate filament family. In terms of assembly, heterotetramer of two type I and two type II keratins. Heterodimer with KRT1. Two heterodimers of KRT1 and KRT10 form a heterotetramer. The KRT10 subunit in the heterotetramer is probably disulfide-linked.

The protein resides in the secreted. Its subcellular location is the extracellular space. It localises to the cell surface. It is found in the cytoplasm. Functionally, plays a role in the establishment of the epidermal barrier on plantar skin. Involved in the maintenance of cell layer development and keratin filament bundles in suprabasal cells of the epithelium. The polypeptide is Keratin, type I cytoskeletal 10 (Rattus norvegicus (Rat)).